The chain runs to 107 residues: Growth-regulated alpha protein (107 aa).

The first 34 residues, 1 to 34 (MARAALSAAPSNPRLLRVALLLLLLVAAGRRAAG), serve as a signal peptide directing secretion. 2 cysteine pairs are disulfide-bonded: C43–C69 and C45–C85.

The protein belongs to the intercrine alpha (chemokine CxC) family. In terms of processing, N-terminal processed forms GRO-alpha(4-73), GRO-alpha(5-73) and GRO-alpha(6-73) are produced by proteolytic cleavage after secretion from peripheral blood monocytes.

It localises to the secreted. In terms of biological role, has chemotactic activity for neutrophils. May play a role in inflammation and exerts its effects on endothelial cells in an autocrine fashion. In vitro, the processed forms GRO-alpha(4-73), GRO-alpha(5-73) and GRO-alpha(6-73) show a 30-fold higher chemotactic activity. This chain is Growth-regulated alpha protein (CXCL1), found in Homo sapiens (Human).